A 400-amino-acid chain; its full sequence is S-adenosylmethionine synthase (400 aa).

His-15 is a binding site for ATP. Position 17 (Asp-17) interacts with Mg(2+). Glu-43 contacts K(+). Glu-56 and Gln-99 together coordinate L-methionine. Residues 99–109 (QSLEIGAGVDT) are flexible loop. ATP is bound by residues 174–176 (DGK), Asp-254, 260–261 (RK), Ala-277, and Lys-281. Asp-254 lines the L-methionine pocket. Residue Lys-285 coordinates L-methionine.

The protein belongs to the AdoMet synthase family. In terms of assembly, homotetramer; dimer of dimers. Mg(2+) is required as a cofactor. It depends on K(+) as a cofactor.

It is found in the cytoplasm. The catalysed reaction is L-methionine + ATP + H2O = S-adenosyl-L-methionine + phosphate + diphosphate. Its pathway is amino-acid biosynthesis; S-adenosyl-L-methionine biosynthesis; S-adenosyl-L-methionine from L-methionine: step 1/1. In terms of biological role, catalyzes the formation of S-adenosylmethionine (AdoMet) from methionine and ATP. The overall synthetic reaction is composed of two sequential steps, AdoMet formation and the subsequent tripolyphosphate hydrolysis which occurs prior to release of AdoMet from the enzyme. The chain is S-adenosylmethionine synthase from Corynebacterium kroppenstedtii (strain DSM 44385 / JCM 11950 / CIP 105744 / CCUG 35717).